A 258-amino-acid chain; its full sequence is Ubiquinone/menaquinone biosynthesis C-methyltransferase UbiE (258 aa).

Residues 1-20 (MSESRTSADGGMETSYGFRE) form a disordered region. S-adenosyl-L-methionine contacts are provided by residues threonine 81, aspartate 102, and 130–131 (NA).

The protein belongs to the class I-like SAM-binding methyltransferase superfamily. MenG/UbiE family.

It carries out the reaction a 2-demethylmenaquinol + S-adenosyl-L-methionine = a menaquinol + S-adenosyl-L-homocysteine + H(+). The catalysed reaction is a 2-methoxy-6-(all-trans-polyprenyl)benzene-1,4-diol + S-adenosyl-L-methionine = a 5-methoxy-2-methyl-3-(all-trans-polyprenyl)benzene-1,4-diol + S-adenosyl-L-homocysteine + H(+). Its pathway is quinol/quinone metabolism; menaquinone biosynthesis; menaquinol from 1,4-dihydroxy-2-naphthoate: step 2/2. It participates in cofactor biosynthesis; ubiquinone biosynthesis. Methyltransferase required for the conversion of demethylmenaquinol (DMKH2) to menaquinol (MKH2) and the conversion of 2-polyprenyl-6-methoxy-1,4-benzoquinol (DDMQH2) to 2-polyprenyl-3-methyl-6-methoxy-1,4-benzoquinol (DMQH2). The protein is Ubiquinone/menaquinone biosynthesis C-methyltransferase UbiE of Rhizobium etli (strain ATCC 51251 / DSM 11541 / JCM 21823 / NBRC 15573 / CFN 42).